The sequence spans 93 residues: UPF0728 protein C10orf53 (93 aa).

Belongs to the UPF0728 family.

This chain is UPF0728 protein C10orf53 (C10orf53), found in Homo sapiens (Human).